A 147-amino-acid chain; its full sequence is Lysozyme C-1 (147 aa).

Positions 1–18 (MKALLTLVFCLLPLAAQG) are cleaved as a signal peptide. Residues 19–147 (KVYSRCELAA…VSKWIRGCRL (129 aa)) enclose the C-type lysozyme domain. 4 disulfides stabilise this stretch: Cys24/Cys145, Cys48/Cys133, Cys82/Cys98, and Cys94/Cys112. Residues Glu53 and Asp70 contribute to the active site.

Belongs to the glycosyl hydrolase 22 family.

It localises to the secreted. The enzyme catalyses Hydrolysis of (1-&gt;4)-beta-linkages between N-acetylmuramic acid and N-acetyl-D-glucosamine residues in a peptidoglycan and between N-acetyl-D-glucosamine residues in chitodextrins.. Its function is as follows. Lysozymes have primarily a bacteriolytic function; those in tissues and body fluids are associated with the monocyte-macrophage system and enhance the activity of immunoagents. In Anas platyrhynchos (Mallard), this protein is Lysozyme C-1.